The sequence spans 220 residues: MKFEKYIDHTLLKPESTRTQIDQIIDEAKAYNFKSVCVNPTHVKYAAERLADSEVLVCTVIGFPLGASTTATKAFETEDAIQNGADEIDMVINIGALKDGRFDDVQQDIEAVVKAAKGHTVKVIIETILLDHDEIVKASELTKAAGADFVKTSTGFAGGGATAEDVKLMKDTVGADVEVKASGGVRNLEDFNKMVEAGATRIGASAGVQIMQGLEADSDY.

Residue Asp89 is the Proton donor/acceptor of the active site. Lys151 serves as the catalytic Schiff-base intermediate with acetaldehyde. Lys180 (proton donor/acceptor) is an active-site residue.

The protein belongs to the DeoC/FbaB aldolase family. DeoC type 1 subfamily.

It is found in the cytoplasm. The catalysed reaction is 2-deoxy-D-ribose 5-phosphate = D-glyceraldehyde 3-phosphate + acetaldehyde. It participates in carbohydrate degradation; 2-deoxy-D-ribose 1-phosphate degradation; D-glyceraldehyde 3-phosphate and acetaldehyde from 2-deoxy-alpha-D-ribose 1-phosphate: step 2/2. In terms of biological role, catalyzes a reversible aldol reaction between acetaldehyde and D-glyceraldehyde 3-phosphate to generate 2-deoxy-D-ribose 5-phosphate. This is Deoxyribose-phosphate aldolase 1 from Staphylococcus aureus (strain bovine RF122 / ET3-1).